The following is a 65-amino-acid chain: Small ribosomal subunit protein eS17 (65 aa).

Belongs to the eukaryotic ribosomal protein eS17 family.

The chain is Small ribosomal subunit protein eS17 from Archaeoglobus fulgidus (strain ATCC 49558 / DSM 4304 / JCM 9628 / NBRC 100126 / VC-16).